A 177-amino-acid chain; its full sequence is Large ribosomal subunit protein uL6 (177 aa).

This sequence belongs to the universal ribosomal protein uL6 family. In terms of assembly, part of the 50S ribosomal subunit.

This protein binds to the 23S rRNA, and is important in its secondary structure. It is located near the subunit interface in the base of the L7/L12 stalk, and near the tRNA binding site of the peptidyltransferase center. The protein is Large ribosomal subunit protein uL6 of Beijerinckia indica subsp. indica (strain ATCC 9039 / DSM 1715 / NCIMB 8712).